The following is a 298-amino-acid chain: Putative insertion sequence ATP-binding protein y4iQ/y4nD/y4sD (298 aa).

114–121 (GPPGGGKS) is an ATP binding site. Positions 276-298 (RQSEHDETLASDNQHDTFMPTAT) are disordered.

Belongs to the IS21/IS1162 putative ATP-binding protein family.

This is Putative insertion sequence ATP-binding protein y4iQ/y4nD/y4sD from Sinorhizobium fredii (strain NBRC 101917 / NGR234).